The sequence spans 404 residues: Probable eukaryotic initiation factor 4A (404 aa).

Positions 1-28 are disordered; it reads MAQQGKVEPQDQDSFLDDQPGIRPIPSF. The short motif at 26–54 is the Q motif element; sequence PSFDDMPLHQNLLRGIYSHGFEKPSSIQQ. The 175-residue stretch at 57 to 231 folds into the Helicase ATP-binding domain; sequence IVPFTRGGDI…KKFMRDPTRI (175 aa). ATP is bound at residue 70 to 77; sequence AQSGTGKT. Residues 179-182 carry the DEAD box motif; the sequence is DEAD. Residues 242–402 enclose the Helicase C-terminal domain; it reads GIKQYFIAVE…ELPVDFAAYL (161 aa).

Belongs to the DEAD box helicase family. eIF4A subfamily. As to quaternary structure, eIF4F is a multi-subunit complex, the composition of which varies with external and internal environmental conditions. It is composed of at least EIF4A, EIF4E and EIF4G.

The enzyme catalyses ATP + H2O = ADP + phosphate + H(+). Functionally, ATP-dependent RNA helicase which is a subunit of the eIF4F complex involved in cap recognition and is required for mRNA binding to ribosome. In the current model of translation initiation, eIF4A unwinds RNA secondary structures in the 5'-UTR of mRNAs which is necessary to allow efficient binding of the small ribosomal subunit, and subsequent scanning for the initiator codon. The chain is Probable eukaryotic initiation factor 4A from Trypanosoma cruzi (strain CL Brener).